The sequence spans 309 residues: Olfactory receptor 6C4 (309 aa).

Residues 1-23 are Extracellular-facing; that stretch reads MKNRTMFGEFILLGLTNQPELQV. An N-linked (GlcNAc...) asparagine glycan is attached at Asn3. The chain crosses the membrane as a helical span at residues 24-44; that stretch reads MIFIFLFLTYMLSILGNLTII. Residues 45–52 are Cytoplasmic-facing; sequence TLTLLDPH. The chain crosses the membrane as a helical span at residues 53–73; it reads LQTPMYFFLRNFSFLEISFTS. Over 74–97 the chain is Extracellular; the sequence is IFIPRFLTSMTTGNKVISFAGCLT. Residues Cys95 and Cys187 are joined by a disulfide bond. Residues 98-118 form a helical membrane-spanning segment; sequence QYFFAIFLGATEFYLLASMSY. At 119-137 the chain is on the cytoplasmic side; sequence DRYVAICKPLHYLTIMSSR. The helical transmembrane segment at 138–158 threads the bilayer; that stretch reads VCIQLVFCSWLGGFLAILPPI. Residues 159-195 lie on the Extracellular side of the membrane; sequence ILMTQVDFCVSNILNHYYCDYGPLVELACSDTSLLEL. A helical membrane pass occupies residues 196-215; that stretch reads MVILLAVVTLMVTLVLVTLS. At 216–235 the chain is on the cytoplasmic side; sequence YTYIIRTILRIPSAQQRTKA. Residues 236 to 256 traverse the membrane as a helical segment; sequence FSTCSSHMIVISLSYGSCMFM. Over 257 to 269 the chain is Extracellular; that stretch reads YINPSAKEGGAFN. A helical membrane pass occupies residues 270–290; that stretch reads KGIAVLITSVTPLLNPFIYTL. Residues 291–309 lie on the Cytoplasmic side of the membrane; the sequence is RNQQVKQAFKDSVKKIVKL.

It belongs to the G-protein coupled receptor 1 family.

The protein resides in the cell membrane. Its function is as follows. Odorant receptor. The polypeptide is Olfactory receptor 6C4 (OR6C4) (Homo sapiens (Human)).